The sequence spans 618 residues: Pyranose 2-oxidase (618 aa).

The residue at position 170 (H170) is a Tele-8alpha-FAD histidine. The substrate site is built by Q441 and H443. Residue H540 is the Proton acceptor of the active site. N583 is a catalytic residue.

Belongs to the GMC oxidoreductase family. As to quaternary structure, homotetramer. Requires FAD as cofactor.

It carries out the reaction D-glucose + O2 = 2-dehydro-D-glucose + H2O2. In terms of biological role, catalyzes the oxidation of various aldopyranoses and disaccharides on carbon-2 to the corresponding 2-keto sugars concomitant with the reduction of O(2) to H(2)O(2). This Lyophyllum shimeji (Hon-shimeji) protein is Pyranose 2-oxidase (p2ox).